The sequence spans 371 residues: Probable dual-specificity RNA methyltransferase RlmN (371 aa).

Glu113 serves as the catalytic Proton acceptor. The Radical SAM core domain maps to 119–352 (QSWGNSVCVT…TTVRREMGGE (234 aa)). An intrachain disulfide couples Cys126 to Cys357. [4Fe-4S] cluster contacts are provided by Cys133, Cys137, and Cys140. Residues 182–183 (GE), Ser214, 237–239 (SLH), and Asn313 contribute to the S-adenosyl-L-methionine site. Cys357 functions as the S-methylcysteine intermediate in the catalytic mechanism.

Belongs to the radical SAM superfamily. RlmN family. [4Fe-4S] cluster is required as a cofactor.

The protein resides in the cytoplasm. The enzyme catalyses adenosine(2503) in 23S rRNA + 2 reduced [2Fe-2S]-[ferredoxin] + 2 S-adenosyl-L-methionine = 2-methyladenosine(2503) in 23S rRNA + 5'-deoxyadenosine + L-methionine + 2 oxidized [2Fe-2S]-[ferredoxin] + S-adenosyl-L-homocysteine. It catalyses the reaction adenosine(37) in tRNA + 2 reduced [2Fe-2S]-[ferredoxin] + 2 S-adenosyl-L-methionine = 2-methyladenosine(37) in tRNA + 5'-deoxyadenosine + L-methionine + 2 oxidized [2Fe-2S]-[ferredoxin] + S-adenosyl-L-homocysteine. Specifically methylates position 2 of adenine 2503 in 23S rRNA and position 2 of adenine 37 in tRNAs. This Symbiobacterium thermophilum (strain DSM 24528 / JCM 14929 / IAM 14863 / T) protein is Probable dual-specificity RNA methyltransferase RlmN.